The following is a 474-amino-acid chain: MSLELPGNYRLSRLKSIQIRNVQEIQNHSKFAINTTENLWKRDVQLKRAISEGTIRIFISLHVQSKKLPVYITETSGNANHIFYVDEKVTEKLQKYRHEEYFIVRTWCSSSSHAFKLHKEWKILRYDSNFRYIGNDPVFAVCHIRNGLLCEFNDGVYIYTTSQSSDIMRQTSFPKSASTYSIDRRKDGYTIQKITRILKLAECIDEMHIAKHEIRAHFQEEEFQQIRLMHKRMLLRDEKIDELAKLEHLWQKQINSITQMRTKFDKTKSWLSSKRNTLNKSKESLQKDEAEYVELANSLKTKVETNIEIRILMAHAIRMHVSHLSKIYPIQPSPGNHDEFTIRNLRLSFEPDKINNVEMAASIGFLAHLLQTLSKYLEKELAYPILCASSRSSILDTLTPDIPTRIFPLYPATRPIELFEHAIYLLNQDVNDFLETFGLPIDQSMDILRNFKKLLQFILSGQHLSFVQVTSTAP.

A coiled-coil region spans residues 271-300 (LSSKRNTLNKSKESLQKDEAEYVELANSLK).

It belongs to the VPS38 family. Component of the vps34 PI3-kinase complex II composed of atg6, pik3, vps15 and vps38.

It is found in the cytoplasm. The protein localises to the golgi apparatus. It localises to the trans-Golgi network membrane. Its subcellular location is the endosome membrane. In terms of biological role, involved in endosome-to-Golgi retrograde transport as part of the vps34 PI3-kinase complex II. Mediates the interaction between atg6 and the pik3-ppk19 core complex, leading to the recruitment of atg6 to the membrane. This Schizosaccharomyces pombe (strain 972 / ATCC 24843) (Fission yeast) protein is Vacuolar protein sorting-associated protein 38 (vps38).